The sequence spans 422 residues: COUP transcription factor 1 (422 aa).

The segment at 1-80 (MAMVVSSWRD…QGPPGSGQSQ (80 aa)) is disordered. Positions 39 to 66 (EQQQAGSGAPHTPQTPGQPGAPATPGTQ) are enriched in low complexity. The nuclear receptor DNA-binding region spans 82-157 (HIECVVCGDK…VGMRREAVQR (76 aa)). 2 NR C4-type zinc fingers span residues 85–105 (CVVCGDKSSGKHYGQFTCEGC) and 121–145 (CRANRNCPIDQHHRNQCQYCRLKKC). The NR LBD domain maps to 183–409 (YLSGYISLLL…TLIRDMLLSG (227 aa)). The important for dimerization stretch occupies residues 343-422 (LQEKSQCALE…NWPYMSIQCS (80 aa)).

This sequence belongs to the nuclear hormone receptor family. NR2 subfamily. In terms of assembly, binds DNA as dimer; homodimer and probable heterodimer with NR2F6. Interacts with GTF2B; this interaction is direct. Interacts with COPS2.

It localises to the nucleus. Coup (chicken ovalbumin upstream promoter) transcription factor binds to the ovalbumin promoter and, in conjunction with another protein (S300-II) stimulates initiation of transcription. Binds to both direct repeats and palindromes of the 5'-AGGTCA-3' motif. Represses transcriptional activity of LHCG. This Mus musculus (Mouse) protein is COUP transcription factor 1 (Nr2f1).